Consider the following 407-residue polypeptide: MAVKTLEDLLNDGDREIAGRGVLVRSDLNVPLDDNGAITDPGRIIASVPTLEALAEAGAKVIVTAHLGRPKGGPDPKYSLKPVAAALSEKLGRHVQLAGDVVGTDALARAEGLTDGDVLLLENIRFDPRETSKDDGERRKLAEALVELVGDDGAFVSDGFGVVHRKQASVYDIATLLPHYAGTLVAAEVKVLEQLTSSTDRPYAVVLGGSKVSDKLAVIESLAKKADSLVIGGGMCFTFLASQGVSVGKSLVQPEMIDTCRELLDTYGDVIHLPVDIVVAPEFSADAEPETVAADRIPEDKMGLDIGPESVKRFTNLLSNARTVFWNGPMGVFEFPAFAAGTKGVAEAIIGATAKGAFSVVGGGDSAAAVRQLGLAEDGFSHISTGGGASLEYLEGKELPGIQVLES.

Substrate-binding positions include aspartate 27–asparagine 29, arginine 43, histidine 66–arginine 69, arginine 125, and arginine 165. Residues lysine 215, glycine 303, glutamate 334, and glycine 363–serine 366 each bind ATP.

It belongs to the phosphoglycerate kinase family. Monomer.

The protein resides in the cytoplasm. It catalyses the reaction (2R)-3-phosphoglycerate + ATP = (2R)-3-phospho-glyceroyl phosphate + ADP. The protein operates within carbohydrate degradation; glycolysis; pyruvate from D-glyceraldehyde 3-phosphate: step 2/5. The polypeptide is Phosphoglycerate kinase (Mycobacterium sp. (strain JLS)).